A 172-amino-acid chain; its full sequence is dCTP pyrophosphatase (172 aa).

The enzyme catalyses dCTP + H2O = dCMP + diphosphate + H(+). This Enterobacteria phage LZ5 (Bacteriophage LZ5) protein is dCTP pyrophosphatase (56).